We begin with the raw amino-acid sequence, 298 residues long: uncharacterized protein (298 aa).

The protein to M.tuberculosis Rv1486c, M.bovis Mb1522c and M.avium MAV321.

This is an uncharacterized protein from Mycobacterium leprae (strain TN).